The following is a 683-amino-acid chain: Methionine--tRNA ligase (683 aa).

The 'HIGH' region motif lies at 15–25 (PYANGPIHLGH). Zn(2+) contacts are provided by cysteine 146, cysteine 149, cysteine 159, and cysteine 162. The 'KMSKS' region motif lies at 332–336 (KMSKS). Lysine 335 is a binding site for ATP. The 102-residue stretch at 582-683 (DFAKIDLRIA…EGALPGMRVK (102 aa)) folds into the tRNA-binding domain.

It belongs to the class-I aminoacyl-tRNA synthetase family. MetG type 1 subfamily. As to quaternary structure, homodimer. The cofactor is Zn(2+).

It is found in the cytoplasm. The catalysed reaction is tRNA(Met) + L-methionine + ATP = L-methionyl-tRNA(Met) + AMP + diphosphate. Functionally, is required not only for elongation of protein synthesis but also for the initiation of all mRNA translation through initiator tRNA(fMet) aminoacylation. The sequence is that of Methionine--tRNA ligase from Shewanella frigidimarina (strain NCIMB 400).